Here is a 469-residue protein sequence, read N- to C-terminus: Calcium/calmodulin-dependent protein kinase type IV (469 aa).

Phosphoserine; by autocatalysis is present on residues serine 11 and serine 12. In terms of domain architecture, Protein kinase spans 42 to 296 (FEVESELGRG…TFQALQHPWV (255 aa)). Residues 48 to 56 (LGRGATSIV) and lysine 71 contribute to the ATP site. A glycan (O-linked (GlcNAc) threonine) is linked at threonine 53. An O-linked (GlcNAc) serine glycan is attached at serine 54. O-linked (GlcNAc) serine glycosylation occurs at serine 133. Aspartate 160 functions as the Proton acceptor in the catalytic mechanism. The O-linked (GlcNAc) serine glycan is linked to serine 185. A Phosphothreonine modification is found at threonine 196. Residues 297-336 (TGKAANFVHMDTAQKKLQEFNARRKLKAAVKAVVASSRLG) form an autoinhibitory domain region. A PP2A-binding region spans residues 302–319 (NFVHMDTAQKKLQEFNAR). A calmodulin-binding region spans residues 318–337 (ARRKLKAAVKAVVASSRLGS). The residue at position 332 (serine 332) is a Phosphoserine; by autocatalysis. The tract at residues 336-469 (GSASSSHTSI…PQQDAIQPEY (134 aa)) is disordered. Residue serine 337 is modified to Phosphoserine. Residues serine 340, serine 341, and serine 352 are each glycosylated (O-linked (GlcNAc) serine). The segment covering 360–374 (DAKDSTDLLGKKMQE) has biased composition (basic and acidic residues). A compositionally biased stretch (acidic residues) spans 375-388 (EDQEEDQVEAEASA). Over residues 389–409 (DEMRKLQSEEVEKDAGVKEEE) the composition is skewed to basic and acidic residues. Residues 417-426 (DPEDELETDD) show a composition bias toward acidic residues. Residues 427-441 (PEMKRDSEEKLKSVE) show a composition bias toward basic and acidic residues. Residues serine 433 and serine 439 each carry the phosphoserine modification. Residues 442–453 (EEMDPMTEEEAP) are compositionally biased toward acidic residues.

This sequence belongs to the protein kinase superfamily. CAMK Ser/Thr protein kinase family. CaMK subfamily. As to quaternary structure, monomer. Interacts with protein phosphatase 2A (PPP2CA/PPP2CB); the interaction is mutually exclusive with binding to Ca(2+)/calmodulin. Phosphorylated by CaMKK1 and CaMKK2 on Thr-196. Dephosphorylated by protein phosphatase 2A. Autophosphorylated on Ser-11 and Ser-12. Post-translationally, glycosylation at Ser-185 modulates the phosphorylation of CaMK4 at Thr-196 and negatively regulates its activity toward CREB1 in basal conditions and during early inomycin stimulation. Expressed in brain and testis.

It localises to the cytoplasm. The protein localises to the nucleus. The enzyme catalyses L-seryl-[protein] + ATP = O-phospho-L-seryl-[protein] + ADP + H(+). It carries out the reaction L-threonyl-[protein] + ATP = O-phospho-L-threonyl-[protein] + ADP + H(+). With respect to regulation, activated by Ca(2+)/calmodulin. Binding of calmodulin results in conformational change that relieves intrasteric autoinhibition and allows phosphorylation of Thr-196 within the activation loop by CaMKK1 or CaMKK2. Phosphorylation of Thr-196 results in a 10-20-fold increase in total activity to generate Ca(2+)/calmodulin-independent activity. Autophosphorylation of the N-terminus Ser-11 and Ser-12 is required for full activation. Inactivated by protein phosphatase 2A (PPP2CA/PPP2CB) which dephosphorylates Thr-196, thereby terminating autonomous activity and helping to maintain the enzyme in its autoinhibited state. In terms of biological role, calcium/calmodulin-dependent protein kinase that operates in the calcium-triggered CaMKK-CaMK4 signaling cascade and regulates, mainly by phosphorylation, the activity of several transcription activators, such as CREB1, MEF2D, JUN and RORA, which play pivotal roles in immune response, inflammation, and memory consolidation. In the thymus, regulates the CD4(+)/CD8(+) double positive thymocytes selection threshold during T-cell ontogeny. In CD4 memory T-cells, is required to link T-cell antigen receptor (TCR) signaling to the production of IL2, IFNG and IL4 (through the regulation of CREB and MEF2). Regulates the differentiation and survival phases of osteoclasts and dendritic cells (DCs). Mediates DCs survival by linking TLR4 and the regulation of temporal expression of BCL2. Phosphorylates the transcription activator CREB1 on 'Ser-133' in hippocampal neuron nuclei and contribute to memory consolidation and long term potentiation (LTP) in the hippocampus. Can activate the MAP kinases MAPK1/ERK2, MAPK8/JNK1 and MAPK14/p38 and stimulate transcription through the phosphorylation of ELK1 and ATF2. Can also phosphorylate in vitro CREBBP, PRM2, MEF2A and STMN1/OP18. May be involved in spermatogenesis. This chain is Calcium/calmodulin-dependent protein kinase type IV (Camk4), found in Mus musculus (Mouse).